Here is a 78-residue protein sequence, read N- to C-terminus: UPF0349 protein SAHV_0934 (78 aa).

This sequence belongs to the UPF0349 family.

The polypeptide is UPF0349 protein SAHV_0934 (Staphylococcus aureus (strain Mu3 / ATCC 700698)).